A 118-amino-acid chain; its full sequence is Basic phospholipase A2 PA-10A (118 aa).

Cystine bridges form between cysteine 11/cysteine 71, cysteine 27/cysteine 117, cysteine 29/cysteine 45, cysteine 44/cysteine 98, cysteine 51/cysteine 91, cysteine 60/cysteine 84, and cysteine 78/cysteine 89. Tyrosine 28, glycine 30, and glycine 32 together coordinate Ca(2+). Residue histidine 48 is part of the active site. Aspartate 49 lines the Ca(2+) pocket. The active site involves aspartate 92.

The protein belongs to the phospholipase A2 family. Group I subfamily. D49 sub-subfamily. Ca(2+) serves as cofactor. In terms of tissue distribution, expressed by the venom gland.

It localises to the secreted. It catalyses the reaction a 1,2-diacyl-sn-glycero-3-phosphocholine + H2O = a 1-acyl-sn-glycero-3-phosphocholine + a fatty acid + H(+). Functionally, PLA2 catalyzes the calcium-dependent hydrolysis of the 2-acyl groups in 3-sn-phosphoglycerides. The protein is Basic phospholipase A2 PA-10A of Pseudechis australis (Mulga snake).